The chain runs to 385 residues: Putative F-box protein At1g47765 (385 aa).

A compositionally biased stretch (basic residues) spans 1–19 (MEQQKQKKRKVVSKSKRTQ). The segment at 1-24 (MEQQKQKKRKVVSKSKRTQSKSAS) is disordered. The 50-residue stretch at 20 to 69 (SKSASSLPLDLTSEILLRLPEKSIARFRCVSKLWLSITTDPYFINLFETR) folds into the F-box domain.

This is Putative F-box protein At1g47765 from Arabidopsis thaliana (Mouse-ear cress).